The sequence spans 123 residues: SGSCEVKTCWWAQPDFRAIGDYLKDKYDSASEMVVEKHRESRGWVETLRAKYALFKPPTERDLVYYENSPNFCEPNPETGSFGTRDRMCNVTSHGIDGCDLLCCGRGHNTRTEKRKEKCHCIL.

The O-palmitoleoyl serine moiety is linked to residue Ser1. An intrachain disulfide couples Cys89 to Cys104. Asn90 is a glycosylation site (N-linked (GlcNAc...) asparagine).

Belongs to the Wnt family. Disulfide bonds have critical and distinct roles in secretion and activity. Loss of each conserved cysteine results in high molecular weight oxidized Wnt oligomers, which are formed through inter-Wnt disulfide bonding. In terms of processing, palmitoleoylation is required for efficient binding to frizzled receptors. Depalmitoleoylation leads to Wnt signaling pathway inhibition.

It localises to the secreted. The protein resides in the extracellular space. The protein localises to the extracellular matrix. In terms of biological role, ligand for members of the frizzled family of seven transmembrane receptors. Functions in the canonical Wnt signaling pathway that results in activation of transcription factors of the TCF/LEF family. Required for normal embryonic mesoderm development and formation of caudal somites. Required for normal morphogenesis of the developing neural tube. This Pituophis melanoleucus (Pine snake) protein is Protein Wnt-3a (WNT-3A).